We begin with the raw amino-acid sequence, 482 residues long: Class E basic helix-loop-helix protein 41 (482 aa).

Lys31 is covalently cross-linked (Glycyl lysine isopeptide (Lys-Gly) (interchain with G-Cter in SUMO2)). The bHLH domain maps to Thr44–Leu99. The necessary for interaction with RXRA and repressor activity towards RXRA stretch occupies residues Leu67 to Leu71. Lys121 is covalently cross-linked (Glycyl lysine isopeptide (Lys-Gly) (interchain with G-Cter in SUMO2)). An Orange domain is found at Phe131–Leu166. Residue Lys210 forms a Glycyl lysine isopeptide (Lys-Gly) (interchain with G-Cter in SUMO2) linkage. Disordered stretches follow at residues Ala228 to Ala298 and Val438 to Pro482. Basic and acidic residues predominate over residues Ala246 to Lys256. A Glycyl lysine isopeptide (Lys-Gly) (interchain with G-Cter in SUMO2) cross-link involves residue Lys266. Positions Arg285–Ala297 are enriched in gly residues.

Homodimer. Heterodimer with BHLHE40/DEC1. Interacts with CIART and BMAL1. Interacts with RXRA. Interacts with NR0B2 and HNF1A. Highly expressed in skeletal muscle and brain, moderately expressed in pancreas and heart, weakly expressed in placenta, lung, liver and kidney.

It localises to the nucleus. In terms of biological role, transcriptional repressor involved in the regulation of the circadian rhythm by negatively regulating the activity of the clock genes and clock-controlled genes. Acts as the negative limb of a novel autoregulatory feedback loop (DEC loop) which differs from the one formed by the PER and CRY transcriptional repressors (PER/CRY loop). Both these loops are interlocked as it represses the expression of PER1 and in turn is repressed by PER1/2 and CRY1/2. Represses the activity of the circadian transcriptional activator: CLOCK-BMAL1 heterodimer by competing for the binding to E-box elements (5'-CACGTG-3') found within the promoters of its target genes. Negatively regulates its own expression and the expression of DBP and BHLHE41/DEC2. Acts as a corepressor of RXR and the RXR-LXR heterodimers and represses the ligand-induced RXRA/B/G, NR1H3/LXRA, NR1H4 and VDR transactivation activity. Inhibits HNF1A-mediated transactivation of CYP1A2, CYP2E1 AND CYP3A11. The protein is Class E basic helix-loop-helix protein 41 of Homo sapiens (Human).